The following is a 399-amino-acid chain: Elongation factor Tu (399 aa).

The 195-residue stretch at 10–204 (KPHVNIGTIG…AVDASIPEPE (195 aa)) folds into the tr-type G domain. A G1 region spans residues 19–26 (GHVDHGKT). 19–26 (GHVDHGKT) serves as a coordination point for GTP. Thr26 serves as a coordination point for Mg(2+). Residues 60–64 (GITIN) are G2. The G3 stretch occupies residues 81–84 (DCPG). Residues 81-85 (DCPGH) and 136-139 (NKCD) each bind GTP. A G4 region spans residues 136–139 (NKCD). Residues 174-176 (SGL) are G5.

This sequence belongs to the TRAFAC class translation factor GTPase superfamily. Classic translation factor GTPase family. EF-Tu/EF-1A subfamily. In terms of assembly, monomer.

The protein resides in the cytoplasm. It carries out the reaction GTP + H2O = GDP + phosphate + H(+). Functionally, GTP hydrolase that promotes the GTP-dependent binding of aminoacyl-tRNA to the A-site of ribosomes during protein biosynthesis. The sequence is that of Elongation factor Tu from Synechococcus sp. (strain CC9311).